The chain runs to 393 residues: Ubiquitin-like modifier-activating enzyme 5 (393 aa).

ATP is bound by residues Gly-75, Asp-96, Lys-119, Asn-142, and Asn-175. Residues Cys-217 and Cys-220 each contribute to the Zn(2+) site. Catalysis depends on Cys-241, which acts as the Glycyl thioester intermediate. Residues Cys-294 and Cys-299 each coordinate Zn(2+).

This sequence belongs to the ubiquitin-activating E1 family. UBA5 subfamily.

Its function is as follows. E1-like enzyme which activates UFM1. This chain is Ubiquitin-like modifier-activating enzyme 5, found in Bombyx mori (Silk moth).